Here is a 770-residue protein sequence, read N- to C-terminus: MLPGLALLLLAAWTARALEVPTDGNAGLLAEPQIAMFCGRLNMHMNVQNGKWDSDPSGTKTCIDTKEGILQYCQEVYPELQITNVVEANQPVTIQNWCKRGRKQCKTHPHFVIPYRCLVGEFVSDALLVPDKCKFLHQERMDVCETHLHWHTVAKETCSEKSTNLHDYGMLLPCGIDKFRGVEFVCCPLAEESDNVDSADAEEDDSDVWWGGADTDYADGSEDKVVEVAEEEEVAEVEEEEADDDEDDEDGDEVEEEAEEPYEEATERTTSIATTTTTTTESVEEVVREVCSEQAETGPCRAMISRWYFDVTEGKCAPFFYGGCGGNRNNFDTEEYCMAVCGSVMSQSLLKTTQEPLARDPVKLPTTAASTPDAVDKYLETPGDENEHAHFQKAKERLEAKHRERMSQVMREWEEAERQAKNLPKADKKAVIQHFQEKVESLEQEAANERQQLVETHMARVEAMLNDRRRLALENYITALQAVPPRPRHVFNMLKKYVRAEQKDRQHTLKHFEHVRMVDPKKAAQIRSQVMTHLRVIYERMNQSLSLLYNVPAVAEEIQDEVDELLQKEQNYSDDVLANMISEPRISYGNDALMPSLTETKTTVELLPVNGEFSLDDLQPWHSFGADSVPANTENEVEPVDARPAADRGLTTRPGSGLTNIKTEEISEVKMDAEFRHDSGYEVHHQKLVFFAEDVGSNKGAIIGLMVGGVVIATVIVITLVMLKKKQYTSIHHGVVEVDAAVTPEERHLSKMQQNGYENPTYKFFEQMQN.

The N-terminal stretch at 1–17 (MLPGLALLLLAAWTARA) is a signal peptide. Residues 18 to 701 (LEVPTDGNAG…AEDVGSNKGA (684 aa)) are Extracellular-facing. Positions 28–123 (LLAEPQIAMF…PYRCLVGEFV (96 aa)) are GFLD subdomain. The E1 domain maps to 28 to 189 (LLAEPQIAMF…RGVEFVCCPL (162 aa)). 6 disulfides stabilise this stretch: Cys38/Cys62, Cys73/Cys117, Cys98/Cys105, Cys133/Cys187, Cys144/Cys174, and Cys158/Cys186. 96 to 110 (NWCKRGRKQCKTHPH) is a binding site for heparin. Positions 131–189 (DKCKFLHQERMDVCETHLHWHTVAKETCSEKSTNLHDYGMLLPCGIDKFRGVEFVCCPL) are cuBD subdomain. The Cu(2+) site is built by His147, His151, and Tyr168. The segment at 181–188 (GVEFVCCP) is zinc-binding. Glu183, Cys186, and Cys187 together coordinate Zn(2+). Residues 194–207 (DNVDSADAEEDDSD) show a composition bias toward acidic residues. The interval 194–284 (DNVDSADAEE…TTTTTTESVE (91 aa)) is disordered. The residue at position 198 (Ser198) is a Phosphoserine; by CK2. Position 206 is a phosphoserine; by CK1 (Ser206). Residues Tyr217 and Tyr262 each carry the sulfotyrosine modification. The span at 228-264 (VAEEEEVAEVEEEEADDDEDDEDGDEVEEEAEEPYEE) shows a compositional bias: acidic residues. Residues 268–281 (RTTSIATTTTTTTE) are compositionally biased toward low complexity. Disulfide bonds link Cys291–Cys341, Cys300–Cys324, and Cys316–Cys337. The BPTI/Kunitz inhibitor domain maps to 291-341 (CSEQAETGPCRAMISRWYFDVTEGKCAPFFYGGCGGNRNNFDTEEYCMAVC). Tyr336 is subject to Sulfotyrosine. The OX-2 signature appears at 344 to 365 (VMSQSLLKTTQEPLARDPVKLP). The E2 domain maps to 374–565 (AVDKYLETPG…EEIQDEVDEL (192 aa)). Residues 391–423 (FQKAKERLEAKHRERMSQVMREWEEAERQAKNL) are heparin-binding. Ser441 is subject to Phosphoserine. Residues 491–522 (FNMLKKYVRAEQKDRQHTLKHFEHVRMVDPKK) form a heparin-binding region. The residue at position 497 (Tyr497) is a Phosphotyrosine. The collagen-binding stretch occupies residues 523–540 (AAQIRSQVMTHLRVIYER). N-linked (GlcNAc...) asparagine glycosylation is found at Asn542 and Asn571. Cu(2+) is bound by residues His677, Tyr681, His684, and His685. Positions 677, 681, 684, and 685 each coordinate Zn(2+). The interval 695-722 (VGSNKGAIIGLMVGGVVIATVIVITLVM) is interaction with PSEN1. Residues 702–722 (IIGLMVGGVVIATVIVITLVM) traverse the membrane as a helical segment. Topologically, residues 723–770 (LKKKQYTSIHHGVVEVDAAVTPEERHLSKMQQNGYENPTYKFFEQMQN) are cytoplasmic. The short motif at 724-734 (KKKQYTSIHHG) is the Basolateral sorting signal element. Thr729 carries the post-translational modification Phosphothreonine. At Ser730 the chain carries Phosphoserine; by APP-kinase I. Residues 732–751 (HHGVVEVDAAVTPEERHLSK) are interaction with G(o)-alpha. A Phosphothreonine; by CDK5 and MAPK10 modification is found at Thr743. The segment at 756 to 770 (GYENPTYKFFEQMQN) is required for the interaction with KIF5B and for anterograde transport in axons. Phosphotyrosine; by ABL1 is present on Tyr757. The short motif at 757-762 (YENPTY) is the YENPXY motif; contains endocytosis signal element. Lys763 is covalently cross-linked (Glycyl lysine isopeptide (Lys-Gly) (interchain with G-Cter in ubiquitin)).

Belongs to the APP family. In terms of assembly, binds, via its C-terminus, to the PID domain of several cytoplasmic proteins, including APBB family members, the APBA family, MAPK8IP1, SHC1 and NUMB and DAB1. Binding to DAB1 inhibits its serine phosphorylation. Interacts (via NPXY motif) with DAB2 (via PID domain); the interaction is impaired by tyrosine phosphorylation of the NPXY motif. Also interacts with GPCR-like protein BPP, APPBP1, IB1, KNS2 (via its TPR domains), APPBP2 (via BaSS) and DDB1. In vitro, it binds MAPT via the MT-binding domains. Associates with microtubules in the presence of ATP and in a kinesin-dependent manner. Interacts, through a C-terminal domain, with GNAO1. Amyloid-beta protein 42 binds CHRNA7 in hippocampal neurons. Amyloid-beta associates with HADH2. Interacts with CPEB1, ANKS1B and AGER. Interacts with ITM2B. Interacts with ITM2C. Interacts with IDE. Can form homodimers; dimerization is enhanced in the presence of Cu(2+) ions. Can form homodimers; this is promoted by heparin binding. Amyloid-beta protein 40 interacts with S100A9. CTF-alpha product of APP interacts with GSAP. Interacts with SORL1 (via N-terminal ectodomain); this interaction retains APP in the trans-Golgi network and reduces processing into soluble APP-alpha and amyloid-beta peptides. The C99 fragment also interacts with SORL1. Interacts with PLD3. Interacts with VDAC1. Interacts with NSG1; could regulate APP processing. Amyloid-beta protein 42 interacts with FPR2. Interacts (via transmembrane region) with PSEN1; the interaction is direct. Interacts with LRRK2. Interacts (via cytoplasmic domain) with KIF5B. Interacts (via C-terminus) with APBB2/FE65L1 (via C-terminus). Interacts (via intracellular domain) with APBB3. Post-translationally, proteolytically processed under normal cellular conditions. Cleavage either by alpha-secretase, beta-secretase or theta-secretase leads to generation and extracellular release of soluble APP peptides, S-APP-alpha and S-APP-beta, and the retention of corresponding membrane-anchored C-terminal fragments, C80, C83 and C99. Subsequent processing of C80 and C83 by gamma-secretase yields P3 peptides. This is the major secretory pathway and is non-amyloidogenic. Alternatively, presenilin/nicastrin-mediated gamma-secretase processing of C99 releases the amyloid-beta proteins, amyloid-beta protein 40 and amyloid-beta protein 42, major components of amyloid plaques, and the cytotoxic C-terminal fragments, gamma-CTF(50), gamma-CTF(57) and gamma-CTF(59). PSEN1 cleavage is more efficient with C83 than with C99 as substrate (in vitro). Amyloid-beta protein 40 and Amyloid-beta protein 42 are cleaved by ACE. Many other minor amyloid-beta peptides, amyloid-beta 1-X peptides, are found in cerebral spinal fluid (CSF) including the amyloid-beta X-15 peptides, produced from the cleavage by alpha-secretase. In terms of processing, proteolytically cleaved by caspases during neuronal apoptosis. Cleavage at Asp-739 by either caspase-3, -8 or -9 results in the production of the neurotoxic C31 peptide and the increased production of amyloid-beta peptides. N- and O-glycosylated. Post-translationally, phosphorylation in the C-terminal on tyrosine, threonine and serine residues is neuron-specific. Phosphorylation can affect APP processing, neuronal differentiation and interaction with other proteins. Phosphorylated on Thr-743 in neuronal cells by Cdc5 kinase and Mapk10, in dividing cells by Cdc2 kinase in a cell-cycle dependent manner with maximal levels at the G2/M phase and, in vitro, by GSK-3-beta. The Thr-743 phosphorylated form causes a conformational change which reduces binding of Fe65 family members. In dopaminergic (DA) neurons, phosphorylation on Thr-743 by LRKK2 promotes the production and the nuclear translocation of the APP intracellular domain (AICD) which induces DA neuron apoptosis. Phosphorylation on Tyr-757 is required for SHC binding. Phosphorylated in the extracellular domain by casein kinases on both soluble and membrane-bound APP. This phosphorylation is inhibited by heparin. In terms of processing, trophic-factor deprivation triggers the cleavage of surface APP by beta-secretase to release sAPP-beta which is further cleaved to release an N-terminal fragment of APP (N-APP). Amyloid-beta peptides are degraded by IDE. Post-translationally, sulfated on tyrosine residues.

The protein resides in the cell membrane. The protein localises to the membrane. Its subcellular location is the perikaryon. It is found in the cell projection. It localises to the growth cone. The protein resides in the clathrin-coated pit. The protein localises to the early endosome. Its subcellular location is the cytoplasmic vesicle. It is found in the endoplasmic reticulum. It localises to the golgi apparatus. The protein resides in the secreted. The protein localises to the cell surface. Its subcellular location is the nucleus. It is found in the cytoplasm. Functionally, functions as a cell surface receptor and performs physiological functions on the surface of neurons relevant to neurite growth, neuronal adhesion and axonogenesis. Interaction between APP molecules on neighboring cells promotes synaptogenesis. Involved in cell mobility and transcription regulation through protein-protein interactions. Can promote transcription activation through binding to APBB1-KAT5 and inhibit Notch signaling through interaction with Numb. Couples to apoptosis-inducing pathways such as those mediated by G(o) and JIP. Inhibits G(o)-alpha ATPase activity. Acts as a kinesin I membrane receptor, mediating the axonal transport of beta-secretase and presenilin 1. By acting as a kinesin I membrane receptor, plays a role in axonal anterograde transport of cargo towards synapses in axons. May be involved in copper homeostasis/oxidative stress through copper ion reduction. In vitro, copper-metallated APP induces neuronal death directly or is potentiated through Cu(2+)-mediated low-density lipoprotein oxidation. Can regulate neurite outgrowth through binding to components of the extracellular matrix such as heparin and collagen I and IV. Induces a AGER-dependent pathway that involves activation of p38 MAPK, resulting in internalization of amyloid-beta peptide and mitochondrial dysfunction in cultured cortical neurons. Provides Cu(2+) ions for GPC1 which are required for release of nitric oxide (NO) and subsequent degradation of the heparan sulfate chains on GPC1. In terms of biological role, amyloid-beta peptides are lipophilic metal chelators with metal-reducing activity. Binds transient metals such as copper, zinc and iron. Its function is as follows. The gamma-CTF peptides as well as the caspase-cleaved peptides, including C31, are potent enhancers of neuronal apoptosis. The chain is Amyloid-beta precursor protein from Pan troglodytes (Chimpanzee).